The following is a 198-amino-acid chain: Holliday junction branch migration complex subunit RuvA (198 aa).

The segment at 1 to 61 is domain I; it reads MYEYFEGIIQ…DNDQTLYGFE (61 aa). The tract at residues 62-140 is domain II; the sequence is GAADKRTFNQ…TDGQPAAAAI (79 aa). Residues 141-145 are flexible linker; that stretch reads APVAS. A domain III region spans residues 146 to 198; the sequence is DVDSELADALAALVALGYPQRTVDGLTDTLKAFSAKTTDAYLREGLRLLSGKA.

This sequence belongs to the RuvA family. As to quaternary structure, homotetramer. Forms an RuvA(8)-RuvB(12)-Holliday junction (HJ) complex. HJ DNA is sandwiched between 2 RuvA tetramers; dsDNA enters through RuvA and exits via RuvB. An RuvB hexamer assembles on each DNA strand where it exits the tetramer. Each RuvB hexamer is contacted by two RuvA subunits (via domain III) on 2 adjacent RuvB subunits; this complex drives branch migration. In the full resolvosome a probable DNA-RuvA(4)-RuvB(12)-RuvC(2) complex forms which resolves the HJ.

The protein resides in the cytoplasm. Its function is as follows. The RuvA-RuvB-RuvC complex processes Holliday junction (HJ) DNA during genetic recombination and DNA repair, while the RuvA-RuvB complex plays an important role in the rescue of blocked DNA replication forks via replication fork reversal (RFR). RuvA specifically binds to HJ cruciform DNA, conferring on it an open structure. The RuvB hexamer acts as an ATP-dependent pump, pulling dsDNA into and through the RuvAB complex. HJ branch migration allows RuvC to scan DNA until it finds its consensus sequence, where it cleaves and resolves the cruciform DNA. This is Holliday junction branch migration complex subunit RuvA from Lacticaseibacillus casei (strain BL23) (Lactobacillus casei).